A 400-amino-acid polypeptide reads, in one-letter code: Probable protein phosphatase 2C 64 (400 aa).

The PPM-type phosphatase domain maps to 47–355; sequence DFSMAVVQAN…DDITVIVVFF (309 aa). Ser-75 bears the Phosphoserine mark. Mn(2+)-binding residues include Asp-86, Gly-87, Asp-287, and Asp-346.

It belongs to the PP2C family. In terms of assembly, interacts with SAUR19. It depends on Mg(2+) as a cofactor. The cofactor is Mn(2+).

The enzyme catalyses O-phospho-L-seryl-[protein] + H2O = L-seryl-[protein] + phosphate. It carries out the reaction O-phospho-L-threonyl-[protein] + H2O = L-threonyl-[protein] + phosphate. Dephosphorylates and represses plasma membrane H(+)-ATPases (PM H(+)-ATPases, e.g. AHA1 and AHA2), thus influencing negatively plant growth and fitness. This chain is Probable protein phosphatase 2C 64, found in Arabidopsis thaliana (Mouse-ear cress).